The primary structure comprises 195 residues: Dephospho-CoA kinase (195 aa).

Residues 3–195 (IIGLTGSIAM…LFVIKSLLKN (193 aa)) form the DPCK domain. An ATP-binding site is contributed by 11–16 (AMGKST).

This sequence belongs to the CoaE family.

The protein resides in the cytoplasm. The catalysed reaction is 3'-dephospho-CoA + ATP = ADP + CoA + H(+). Its pathway is cofactor biosynthesis; coenzyme A biosynthesis; CoA from (R)-pantothenate: step 5/5. Its function is as follows. Catalyzes the phosphorylation of the 3'-hydroxyl group of dephosphocoenzyme A to form coenzyme A. The sequence is that of Dephospho-CoA kinase from Bartonella henselae (strain ATCC 49882 / DSM 28221 / CCUG 30454 / Houston 1) (Rochalimaea henselae).